The chain runs to 192 residues: Fe/S biogenesis protein NfuA (192 aa).

2 residues coordinate [4Fe-4S] cluster: C149 and C152.

Belongs to the NfuA family. Homodimer. Requires [4Fe-4S] cluster as cofactor.

Its function is as follows. Involved in iron-sulfur cluster biogenesis. Binds a 4Fe-4S cluster, can transfer this cluster to apoproteins, and thereby intervenes in the maturation of Fe/S proteins. Could also act as a scaffold/chaperone for damaged Fe/S proteins. The sequence is that of Fe/S biogenesis protein NfuA from Shewanella oneidensis (strain ATCC 700550 / JCM 31522 / CIP 106686 / LMG 19005 / NCIMB 14063 / MR-1).